The chain runs to 133 residues: Protein archease (133 aa).

Asp-11, Asp-132, and Leu-133 together coordinate Ca(2+).

Belongs to the archease family.

Its function is as follows. Activates the tRNA-splicing ligase complex by facilitating the enzymatic turnover of catalytic subunit RtcB. Acts by promoting the guanylylation of RtcB, a key intermediate step in tRNA ligation. Can also alter the NTP specificity of RtcB such that ATP, dGTP or ITP is used efficiently. This chain is Protein archease, found in Thermoplasma volcanium (strain ATCC 51530 / DSM 4299 / JCM 9571 / NBRC 15438 / GSS1).